Here is a 550-residue protein sequence, read N- to C-terminus: Chaperonin GroEL (550 aa).

ATP contacts are provided by residues 30 to 33 (TLGP), Lys-51, 87 to 91 (DGTTT), Gly-415, 479 to 481 (NAA), and Asp-495. The disordered stretch occupies residues 525–550 (PKDEKSSSELNSAPGNGMGGGMGGMM). Over residues 540 to 550 (NGMGGGMGGMM) the composition is skewed to gly residues.

The protein belongs to the chaperonin (HSP60) family. Forms a cylinder of 14 subunits composed of two heptameric rings stacked back-to-back. Interacts with the co-chaperonin GroES.

The protein localises to the cytoplasm. It catalyses the reaction ATP + H2O + a folded polypeptide = ADP + phosphate + an unfolded polypeptide.. Together with its co-chaperonin GroES, plays an essential role in assisting protein folding. The GroEL-GroES system forms a nano-cage that allows encapsulation of the non-native substrate proteins and provides a physical environment optimized to promote and accelerate protein folding. The polypeptide is Chaperonin GroEL (Buchnera aphidicola subsp. Cinara cedri (strain Cc)).